The following is a 213-amino-acid chain: Anti-sigma-E factor ChrR (213 aa).

The interval 2–85 (TIRHHVSDAL…QIQRPAPARR (84 aa)) is sufficient to bind sigma factor and inhibit its activity. Zn(2+) contacts are provided by histidine 6, histidine 31, cysteine 35, cysteine 38, histidine 141, histidine 143, glutamate 147, and histidine 177. Residues 86 to 194 (ADPRAPAPLA…LDCICLAATD (109 aa)) form a required for response to singlet oxygen region.

The protein belongs to the zinc-associated anti-sigma factor (ZAS) superfamily. In terms of assembly, forms a 1:1 complex with cognate ECF RNA polymerase sigma factor RpoE; this inhibits the interaction of RpoE with the RNA polymerase catalytic core. The cofactor is Zn(2+).

In terms of biological role, anti-sigma factor that inhibits the activity of the extracytoplasmic function (ECF) sigma-E factor (RpoE), thereby indirectly regulating the transcription of the cycA and rpoE genes. ECF sigma factors are held in an inactive form by a cognate anti-sigma factor. The protein is Anti-sigma-E factor ChrR (chrR) of Cereibacter sphaeroides (strain ATCC 17023 / DSM 158 / JCM 6121 / CCUG 31486 / LMG 2827 / NBRC 12203 / NCIMB 8253 / ATH 2.4.1.) (Rhodobacter sphaeroides).